The primary structure comprises 78 residues: Conotoxin Cl14.9 (78 aa).

Residues Met1–Ser22 form the signal peptide. A propeptide spanning residues Ala23–Arg47 is cleaved from the precursor. Residue Ile70 is modified to Isoleucine amide. A propeptide spanning residues Asp74 to Gln78 is cleaved from the precursor.

In terms of processing, contains 2 disulfide bonds. Expressed by the venom duct.

It is found in the secreted. In Californiconus californicus (California cone), this protein is Conotoxin Cl14.9.